The following is an 804-amino-acid chain: Phenylalanine--tRNA ligase beta subunit (804 aa).

The 116-residue stretch at 40-155 (GEGIKGVVIG…NDAETGSDAL (116 aa)) folds into the tRNA-binding domain. The 76-residue stretch at 409-484 (IEANNIHVSA…RLYGYDNIPS (76 aa)) folds into the B5 domain. Mg(2+) contacts are provided by Asp462, Asp468, Glu471, and Glu472. In terms of domain architecture, FDX-ACB spans 710–803 (PKYPSVTRDI…LEDTYQAVLR (94 aa)).

This sequence belongs to the phenylalanyl-tRNA synthetase beta subunit family. Type 1 subfamily. As to quaternary structure, tetramer of two alpha and two beta subunits. Mg(2+) is required as a cofactor.

The protein resides in the cytoplasm. The catalysed reaction is tRNA(Phe) + L-phenylalanine + ATP = L-phenylalanyl-tRNA(Phe) + AMP + diphosphate + H(+). This chain is Phenylalanine--tRNA ligase beta subunit (pheT), found in Bacillus subtilis (strain 168).